Consider the following 101-residue polypeptide: Urease subunit beta (101 aa).

It belongs to the urease beta subunit family. As to quaternary structure, heterotrimer of UreA (gamma), UreB (beta) and UreC (alpha) subunits. Three heterotrimers associate to form the active enzyme.

Its subcellular location is the cytoplasm. The catalysed reaction is urea + 2 H2O + H(+) = hydrogencarbonate + 2 NH4(+). Its pathway is nitrogen metabolism; urea degradation; CO(2) and NH(3) from urea (urease route): step 1/1. The polypeptide is Urease subunit beta (Sinorhizobium fredii (strain NBRC 101917 / NGR234)).